The chain runs to 60 residues: Metallothionein A (60 aa).

The tract at residues 1–28 (MDPCECSKSGTCNCGGSCTCTNCSCKSC) is beta. Residues C4, C6, C12, C14, C18, C20, C23, C25, C28, C32, C33, C35, C36, C40, C43, C47, C49, C54, C58, and C59 each contribute to the a divalent metal cation site. The segment at 29 to 60 (KKSCCPCCPSGCTKCASGCVCKGKTCDTSCCQ) is alpha.

Belongs to the metallothionein superfamily. Type 1 family.

Functionally, metallothioneins have a high content of cysteine residues that bind various heavy metals. This Chionodraco rastrospinosus (Ocellated icefish) protein is Metallothionein A (mta).